An 85-amino-acid chain; its full sequence is UPF0298 protein SUB0431 (85 aa).

Belongs to the UPF0298 family.

It localises to the cytoplasm. This Streptococcus uberis (strain ATCC BAA-854 / 0140J) protein is UPF0298 protein SUB0431.